The primary structure comprises 2164 residues: Genome polyprotein (2164 aa).

The N-myristoyl glycine; by host moiety is linked to residue G2. The Cytoplasmic segment spans residues G2–G1477. The tract at residues N208 to D239 is disordered. The segment at L572–V588 is amphipathic alpha-helix. Residues H884 and D901 each act as for protease 2A activity in the active site. Positions 918 and 920 each coordinate Zn(2+). C972 functions as the For protease 2A activity in the catalytic mechanism. 2 residues coordinate Zn(2+): C978 and H980. Residues S1104–Q1173 are membrane-binding. The tract at residues S1104 to T1237 is oligomerization. The interval G1125 to S1129 is RNA-binding. Residues E1197–D1357 form the SF3 helicase domain. G1227–S1234 contacts ATP. Zn(2+) is bound by residues C1365, C1376, and C1381. The C4-type; degenerate zinc-finger motif lies at C1365–C1381. Positions E1408 to A1415 are RNA-binding. Residues M1419–Q1424 form an oligomerization region. An intramembrane segment occupies I1478–Y1493. The Cytoplasmic segment spans residues K1494–F2164. Y1503 carries the post-translational modification O-(5'-phospho-RNA)-tyrosine. Positions G1522 to F1700 constitute a Peptidase C3 domain. Residues H1561, E1592, and C1668 each act as for protease 3C activity in the active site. The region spanning E1932–V2045 is the RdRp catalytic domain. The Mg(2+) site is built by D1938 and D2031.

Belongs to the picornaviruses polyprotein family. As to quaternary structure, interacts with capsid protein VP1 and capsid protein VP3 to form heterotrimeric protomers. Interacts with capsid protein VP0, and capsid protein VP3 to form heterotrimeric protomers. Five protomers subsequently associate to form pentamers which serve as building blocks for the capsid. Interacts with capsid protein VP2, capsid protein VP3 and capsid protein VP4 following cleavage of capsid protein VP0. In terms of assembly, interacts with capsid protein VP1 and capsid protein VP3 in the mature capsid. As to quaternary structure, interacts with capsid protein VP0 and capsid protein VP1 to form heterotrimeric protomers. Five protomers subsequently associate to form pentamers which serve as building blocks for the capsid. Interacts with capsid protein VP4 in the mature capsid. Interacts with protein 2C; this interaction may be important for virion morphogenesis. Interacts with capsid protein VP1 and capsid protein VP3. In terms of assembly, homodimer. As to quaternary structure, homohexamer; forms a hexameric ring structure with 6-fold symmetry characteristic of AAA+ ATPases. Interacts (via N-terminus) with host RTN3 (via reticulon domain); this interaction is important for viral replication. Interacts with capsid protein VP3; this interaction may be important for virion morphogenesis. Interacts with protein 3CD. In terms of assembly, homodimer. Interacts with host GBF1. Interacts (via GOLD domain) with host ACBD3 (via GOLD domain); this interaction allows the formation of a viral protein 3A/ACBD3 heterotetramer with a 2:2 stoichiometry, which will stimulate the recruitment of host PI4KB in order to synthesize PI4P at the viral RNA replication sites. As to quaternary structure, interacts with RNA-directed RNA polymerase. Interacts with protein 3AB and with RNA-directed RNA polymerase. In terms of assembly, interacts with Viral protein genome-linked and with protein 3CD. Mg(2+) is required as a cofactor. Post-translationally, specific enzymatic cleavages in vivo by the viral proteases yield processing intermediates and the mature proteins. Myristoylation is required for the formation of pentamers during virus assembly. Further assembly of 12 pentamers and a molecule of genomic RNA generates the provirion. In terms of processing, during virion maturation, immature virions are rendered infectious following cleavage of VP0 into VP4 and VP2. This maturation seems to be an autocatalytic event triggered by the presence of RNA in the capsid and it is followed by a conformational change infectious virion. Post-translationally, myristoylation is required during RNA encapsidation and formation of the mature virus particle. VPg is uridylylated by the polymerase into VPg-pUpU. This acts as a nucleotide-peptide primer for the genomic RNA replication.

The protein resides in the virion. Its subcellular location is the host cytoplasm. It is found in the host cytoplasmic vesicle membrane. The protein localises to the host nucleus. The enzyme catalyses a ribonucleoside 5'-triphosphate + H2O = a ribonucleoside 5'-diphosphate + phosphate + H(+). The catalysed reaction is Selective cleavage of Tyr-|-Gly bond in the picornavirus polyprotein.. It carries out the reaction RNA(n) + a ribonucleoside 5'-triphosphate = RNA(n+1) + diphosphate. It catalyses the reaction Selective cleavage of Gln-|-Gly bond in the poliovirus polyprotein. In other picornavirus reactions Glu may be substituted for Gln, and Ser or Thr for Gly.. With respect to regulation, replication or transcription is subject to high level of random mutations by the nucleotide analog ribavirin. Functionally, forms an icosahedral capsid of pseudo T=3 symmetry with capsid proteins VP2 and VP3. The capsid is 300 Angstroms in diameter, composed of 60 copies of each capsid protein and enclosing the viral positive strand RNA genome. Capsid protein VP1 mainly forms the vertices of the capsid. Capsid protein VP1 interacts with host cell receptor to provide virion attachment to target host cells. This attachment induces virion internalization. Tyrosine kinases are probably involved in the entry process. After binding to its receptor, the capsid undergoes conformational changes. Capsid protein VP1 N-terminus (that contains an amphipathic alpha-helix) and capsid protein VP4 are externalized. Together, they shape a pore in the host membrane through which viral genome is translocated to host cell cytoplasm. Forms an icosahedral capsid of pseudo T=3 symmetry with capsid proteins VP2 and VP3. The capsid is 300 Angstroms in diameter, composed of 60 copies of each capsid protein and enclosing the viral positive strand RNA genome. Its function is as follows. Lies on the inner surface of the capsid shell. After binding to the host receptor, the capsid undergoes conformational changes. Capsid protein VP4 is released, Capsid protein VP1 N-terminus is externalized, and together, they shape a pore in the host membrane through which the viral genome is translocated into the host cell cytoplasm. In terms of biological role, component of immature procapsids, which is cleaved into capsid proteins VP4 and VP2 after maturation. Allows the capsid to remain inactive before the maturation step. Functionally, cysteine protease that cleaves viral polyprotein and specific host proteins. It is responsible for the autocatalytic cleavage between the P1 and P2 regions, which is the first cleavage occurring in the polyprotein. Also cleaves the host translation initiation factor EIF4G1, in order to shut down the capped cellular mRNA translation. Inhibits the host nucleus-cytoplasm protein and RNA trafficking by cleaving host members of the nuclear pores. Counteracts stress granule formation probably by antagonizing its assembly or promoting its dissassembly. Plays an essential role in the virus replication cycle by acting as a viroporin. Creates a pore in the host endoplasmic reticulum and as a consequence releases Ca2+ in the cytoplasm of infected cell. In turn, high levels of cytoplasmic calcium may trigger membrane trafficking and transport of viral ER-associated proteins to viroplasms, sites of viral genome replication. Its function is as follows. Induces and associates with structural rearrangements of intracellular membranes. Displays RNA-binding, nucleotide binding and NTPase activities. May play a role in virion morphogenesis and viral RNA encapsidation by interacting with the capsid protein VP3. In terms of biological role, localizes the viral replication complex to the surface of membranous vesicles. Together with protein 3CD binds the Cis-Active RNA Element (CRE) which is involved in RNA synthesis initiation. Acts as a cofactor to stimulate the activity of 3D polymerase, maybe through a nucleid acid chaperone activity. Functionally, localizes the viral replication complex to the surface of membranous vesicles. It inhibits host cell endoplasmic reticulum-to-Golgi apparatus transport and causes the disassembly of the Golgi complex, possibly through GBF1 interaction. This would result in depletion of MHC, trail receptors and IFN receptors at the host cell surface. Plays an essential role in viral RNA replication by recruiting ACBD3 and PI4KB at the viral replication sites, thereby allowing the formation of the rearranged membranous structures where viral replication takes place. Acts as a primer for viral RNA replication and remains covalently bound to viral genomic RNA. VPg is uridylylated prior to priming replication into VPg-pUpU. The oriI viral genomic sequence may act as a template for this. The VPg-pUpU is then used as primer on the genomic RNA poly(A) by the RNA-dependent RNA polymerase to replicate the viral genome. During genome replication, the VPg-RNA linkage is removed by the host TDP2, thereby accelerating replication. During the late stage of the replication cycle, host TDP2 is excluded from sites of viral RNA synthesis and encapsidation, allowing for the generation of progeny virions. Its function is as follows. Involved in the viral replication complex and viral polypeptide maturation. It exhibits protease activity with a specificity and catalytic efficiency that is different from protease 3C. Protein 3CD lacks polymerase activity. Protein 3CD binds to the 5'UTR of the viral genome. In terms of biological role, replicates the viral genomic RNA on the surface of intracellular membranes. May form linear arrays of subunits that propagate along a strong head-to-tail interaction called interface-I. Covalently attaches UMP to a tyrosine of VPg, which is used to prime RNA synthesis. The positive stranded RNA genome is first replicated at virus induced membranous vesicles, creating a dsRNA genomic replication form. This dsRNA is then used as template to synthesize positive stranded RNA genomes. ss(+)RNA genomes are either translated, replicated or encapsidated. Functionally, major viral protease that mediates proteolytic processing of the polyprotein. Cleaves host EIF5B, contributing to host translation shutoff. Also cleaves host PABPC1, contributing to host translation shutoff. Cleaves host NLRP1, triggers host N-glycine-mediated degradation of the autoinhibitory NLRP1 N-terminal fragment. The sequence is that of Genome polyprotein from Human rhinovirus A serotype 89 (strain 41467-Gallo) (HRV-89).